Reading from the N-terminus, the 426-residue chain is Glutamate-1-semialdehyde 2,1-aminomutase (426 aa).

An N6-(pyridoxal phosphate)lysine modification is found at Lys265.

The protein belongs to the class-III pyridoxal-phosphate-dependent aminotransferase family. HemL subfamily. Homodimer. The cofactor is pyridoxal 5'-phosphate.

The protein localises to the cytoplasm. It carries out the reaction (S)-4-amino-5-oxopentanoate = 5-aminolevulinate. It participates in porphyrin-containing compound metabolism; protoporphyrin-IX biosynthesis; 5-aminolevulinate from L-glutamyl-tRNA(Glu): step 2/2. The protein is Glutamate-1-semialdehyde 2,1-aminomutase of Yersinia pseudotuberculosis serotype O:1b (strain IP 31758).